The following is a 1157-amino-acid chain: ATP-dependent helicase/deoxyribonuclease subunit B (1157 aa).

In terms of domain architecture, UvrD-like helicase ATP-binding spans 1–277 (MTLQIIAGKS…KLFLENKRAK (277 aa)). 8–15 (GKSGTGKT) contacts ATP. A UvrD-like helicase C-terminal domain is found at 272 to 578 (ENKRAKSDSL…EFSLLPPSLD (307 aa)). [4Fe-4S] cluster is bound by residues Cys794, Cys1115, Cys1118, and Cys1124.

This sequence belongs to the helicase family. AddB/RexB type 1 subfamily. Heterodimer of AddA and AddB. Mg(2+) serves as cofactor. The cofactor is [4Fe-4S] cluster.

Functionally, the heterodimer acts as both an ATP-dependent DNA helicase and an ATP-dependent, dual-direction single-stranded exonuclease. Recognizes the chi site generating a DNA molecule suitable for the initiation of homologous recombination. The AddB subunit has 5' -&gt; 3' nuclease activity but not helicase activity. The chain is ATP-dependent helicase/deoxyribonuclease subunit B from Listeria welshimeri serovar 6b (strain ATCC 35897 / DSM 20650 / CCUG 15529 / CIP 8149 / NCTC 11857 / SLCC 5334 / V8).